Reading from the N-terminus, the 242-residue chain is 1-(5-phosphoribosyl)-5-[(5-phosphoribosylamino)methylideneamino] imidazole-4-carboxamide isomerase (242 aa).

Asp-8 (proton acceptor) is an active-site residue. Asp-129 acts as the Proton donor in catalysis.

It belongs to the HisA/HisF family.

The protein resides in the cytoplasm. It catalyses the reaction 1-(5-phospho-beta-D-ribosyl)-5-[(5-phospho-beta-D-ribosylamino)methylideneamino]imidazole-4-carboxamide = 5-[(5-phospho-1-deoxy-D-ribulos-1-ylimino)methylamino]-1-(5-phospho-beta-D-ribosyl)imidazole-4-carboxamide. It functions in the pathway amino-acid biosynthesis; L-histidine biosynthesis; L-histidine from 5-phospho-alpha-D-ribose 1-diphosphate: step 4/9. The chain is 1-(5-phosphoribosyl)-5-[(5-phosphoribosylamino)methylideneamino] imidazole-4-carboxamide isomerase from Clostridium botulinum (strain Kyoto / Type A2).